A 424-amino-acid polypeptide reads, in one-letter code: Probable methyltransferase EP424R (424 aa).

One can recognise an Adrift-type SAM-dependent 2'-O-MTase domain in the interval 103–315 (QIVTNAWLKM…TYIVGKNRLR (213 aa)). Positions 135 and 228 each coordinate S-adenosyl-L-methionine. Lysine 268 acts as the Proton acceptor in catalysis.

The protein localises to the virion. The protein is Probable methyltransferase EP424R of Ornithodoros (relapsing fever ticks).